We begin with the raw amino-acid sequence, 114 residues long: Probable non-functional T cell receptor beta variable 5-3 (114 aa).

Residues 1-21 (MGPGLLCWELLYLLGAGPVEA) form the signal peptide. An Ig-like domain is found at 22 to 114 (GVTQSPTHLI…SALYLCARSL (93 aa)). A disulfide bridge connects residues Cys-42 and Cys-110. The N-linked (GlcNAc...) asparagine glycan is linked to Asn-96.

Alpha-beta TR is a heterodimer composed of an alpha and beta chain; disulfide-linked. The alpha-beta TR is associated with the transmembrane signaling CD3 coreceptor proteins to form the TR-CD3 (TcR or TCR). The assembly of alpha-beta TR heterodimers with CD3 occurs in the endoplasmic reticulum where a single alpha-beta TR heterodimer associates with one CD3D-CD3E heterodimer, one CD3G-CD3E heterodimer and one CD247 homodimer forming a stable octameric structure. CD3D-CD3E and CD3G-CD3E heterodimers preferentially associate with TR alpha and TR beta chains, respectively. The association of the CD247 homodimer is the last step of TcR assembly in the endoplasmic reticulum and is required for transport to the cell surface.

The protein resides in the cell membrane. Its function is as follows. Probable non-functional open reading frame (ORF) of V region of the variable domain of T cell receptor (TR) beta chain. Non-functional ORF generally cannot participate in the synthesis of a productive T cell receptor (TR) chain due to altered V-(D)-J or switch recombination and/or splicing site (at mRNA level) and/or conserved amino acid change (protein level). Alpha-beta T cell receptors are antigen specific receptors which are essential to the immune response and are present on the cell surface of T lymphocytes. Recognize peptide-major histocompatibility (MH) (pMH) complexes that are displayed by antigen presenting cells (APC), a prerequisite for efficient T cell adaptive immunity against pathogens. Binding of alpha-beta TR to pMH complex initiates TR-CD3 clustering on the cell surface and intracellular activation of LCK that phosphorylates the ITAM motifs of CD3G, CD3D, CD3E and CD247 enabling the recruitment of ZAP70. In turn ZAP70 phosphorylates LAT, which recruits numerous signaling molecules to form the LAT signalosome. The LAT signalosome propagates signal branching to three major signaling pathways, the calcium, the mitogen-activated protein kinase (MAPK) kinase and the nuclear factor NF-kappa-B (NF-kB) pathways, leading to the mobilization of transcription factors that are critical for gene expression and essential for T cell growth and differentiation. The T cell repertoire is generated in the thymus, by V-(D)-J rearrangement. This repertoire is then shaped by intrathymic selection events to generate a peripheral T cell pool of self-MH restricted, non-autoaggressive T cells. Post-thymic interaction of alpha-beta TR with the pMH complexes shapes TR structural and functional avidity. In Homo sapiens (Human), this protein is Probable non-functional T cell receptor beta variable 5-3.